Consider the following 87-residue polypeptide: Small ribosomal subunit protein bS16 (87 aa).

The protein belongs to the bacterial ribosomal protein bS16 family.

The sequence is that of Small ribosomal subunit protein bS16 from Fusobacterium nucleatum subsp. nucleatum (strain ATCC 25586 / DSM 15643 / BCRC 10681 / CIP 101130 / JCM 8532 / KCTC 2640 / LMG 13131 / VPI 4355).